We begin with the raw amino-acid sequence, 423 residues long: Galactosylceramide sulfotransferase (423 aa).

Topologically, residues 1–14 (MLPPQKKPWESMAK) are cytoplasmic. A helical; Signal-anchor for type II membrane protein membrane pass occupies residues 15–35 (GLVLGALFTSFLLLVYSYAVP). At 36-423 (PLHAGLASTT…WKFIRDFLRW (388 aa)) the chain is on the lumenal side. Residues Asn66 and Asn312 are each glycosylated (N-linked (GlcNAc...) asparagine).

It belongs to the galactose-3-O-sulfotransferase family. Expressed in kidney proximal tubule, gastric mucosa and adenocarcinoma. Highly expressed in renal cell carcinoma cell lines.

It is found in the golgi apparatus membrane. It catalyses the reaction a beta-D-galactosyl-(1&lt;-&gt;1')-N-acylsphing-4-enine + 3'-phosphoadenylyl sulfate = an N-acyl-1-beta-D-(3-O-sulfo)-galactosyl-sphing-4-enine + adenosine 3',5'-bisphosphate + H(+). The enzyme catalyses a 1-O-alkyl-2-acyl-3-O-(beta-D-galactosyl)-sn-glycerol + 3'-phosphoadenylyl sulfate = a 1-O-alkyl-2-acyl-3-(beta-D-3-sulfogalactosyl)-sn-glycerol + adenosine 3',5'-bisphosphate + H(+). It carries out the reaction a beta-D-Gal-(1&lt;-&gt;1')-ceramide + 3'-phosphoadenylyl sulfate = 1-(3-O-sulfo-beta-D-galactosyl)-ceramide + adenosine 3',5'-bisphosphate + H(+). The catalysed reaction is a 1,2-diacyl-3-O-(beta-D-galactosyl)-sn-glycerol + 3'-phosphoadenylyl sulfate = 1,2-diacyl-3-(3-O-sulfo-beta-D-galactosyl)-sn-glycerol + adenosine 3',5'-bisphosphate + H(+). It catalyses the reaction a beta-D-Gal-(1-&gt;4)-beta-D-Glc-(1&lt;-&gt;1)-Cer(d18:1(4E)) + 3'-phosphoadenylyl sulfate = beta-D-3-sulfogalactosyl-(1-&gt;4)-beta-D-glucosyl-(1&lt;-&gt;1')-N-acylsphing-4-enine + adenosine 3',5'-bisphosphate + H(+). It participates in lipid metabolism; sphingolipid metabolism. Its function is as follows. Catalyzes the transfer of a sulfate group to position 3 of non-reducing beta-galactosyl residues in glycerolipids and sphingolipids, therefore participates in the biosynthesis of sulfoglycolipids. Catalyzes the synthesis of galactosylceramide sulfate (sulfatide), a major lipid component of the myelin sheath and of monogalactosylalkylacylglycerol sulfate (seminolipid), present in spermatocytes. Seems to prefer beta-glycosides at the non-reducing termini of sugar chains attached to a lipid moiety. Also acts on lactosylceramide, galactosyl 1-alkyl-2-sn-glycerol and galactosyl diacylglycerol (in vitro). The sequence is that of Galactosylceramide sulfotransferase from Homo sapiens (Human).